Consider the following 219-residue polypeptide: Ribosomal RNA small subunit methyltransferase G (219 aa).

The S-adenosyl-L-methionine site is built by Gly81, Leu86, and Arg150.

Belongs to the methyltransferase superfamily. RNA methyltransferase RsmG family.

Its subcellular location is the cytoplasm. The enzyme catalyses guanosine(527) in 16S rRNA + S-adenosyl-L-methionine = N(7)-methylguanosine(527) in 16S rRNA + S-adenosyl-L-homocysteine. Its function is as follows. Specifically methylates the N7 position of guanine in position 527 of 16S rRNA. The polypeptide is Ribosomal RNA small subunit methyltransferase G (Magnetococcus marinus (strain ATCC BAA-1437 / JCM 17883 / MC-1)).